The following is a 157-amino-acid chain: 2-C-methyl-D-erythritol 2,4-cyclodiphosphate synthase (157 aa).

Asp-8 and His-10 together coordinate a divalent metal cation. 4-CDP-2-C-methyl-D-erythritol 2-phosphate-binding positions include 8 to 10 (DVH) and 34 to 35 (HS). His-42 serves as a coordination point for a divalent metal cation. 4-CDP-2-C-methyl-D-erythritol 2-phosphate is bound by residues 56 to 58 (DIG), 61 to 65 (FPDTD), 100 to 106 (AQAPKMA), 132 to 135 (TTTE), Phe-139, and Arg-142.

The protein belongs to the IspF family. As to quaternary structure, homotrimer. A divalent metal cation is required as a cofactor.

It carries out the reaction 4-CDP-2-C-methyl-D-erythritol 2-phosphate = 2-C-methyl-D-erythritol 2,4-cyclic diphosphate + CMP. The protein operates within isoprenoid biosynthesis; isopentenyl diphosphate biosynthesis via DXP pathway; isopentenyl diphosphate from 1-deoxy-D-xylulose 5-phosphate: step 4/6. Functionally, involved in the biosynthesis of isopentenyl diphosphate (IPP) and dimethylallyl diphosphate (DMAPP), two major building blocks of isoprenoid compounds. Catalyzes the conversion of 4-diphosphocytidyl-2-C-methyl-D-erythritol 2-phosphate (CDP-ME2P) to 2-C-methyl-D-erythritol 2,4-cyclodiphosphate (ME-CPP) with a corresponding release of cytidine 5-monophosphate (CMP). The protein is 2-C-methyl-D-erythritol 2,4-cyclodiphosphate synthase of Stutzerimonas stutzeri (strain A1501) (Pseudomonas stutzeri).